Reading from the N-terminus, the 597-residue chain is Elongation factor 4 (597 aa).

In terms of domain architecture, tr-type G spans Gln-2–Glu-184. Residues Asp-14–Thr-19 and Asn-131–Asp-134 contribute to the GTP site.

The protein belongs to the TRAFAC class translation factor GTPase superfamily. Classic translation factor GTPase family. LepA subfamily.

It localises to the cell inner membrane. It catalyses the reaction GTP + H2O = GDP + phosphate + H(+). Required for accurate and efficient protein synthesis under certain stress conditions. May act as a fidelity factor of the translation reaction, by catalyzing a one-codon backward translocation of tRNAs on improperly translocated ribosomes. Back-translocation proceeds from a post-translocation (POST) complex to a pre-translocation (PRE) complex, thus giving elongation factor G a second chance to translocate the tRNAs correctly. Binds to ribosomes in a GTP-dependent manner. The polypeptide is Elongation factor 4 (Bordetella avium (strain 197N)).